The sequence spans 344 residues: Uroporphyrinogen decarboxylase (344 aa).

Substrate contacts are provided by residues 27-31, phenylalanine 46, aspartate 76, tyrosine 151, serine 206, and histidine 319; that span reads RQAGR.

It belongs to the uroporphyrinogen decarboxylase family. As to quaternary structure, homodimer.

The protein resides in the cytoplasm. The catalysed reaction is uroporphyrinogen III + 4 H(+) = coproporphyrinogen III + 4 CO2. Its pathway is porphyrin-containing compound metabolism; protoporphyrin-IX biosynthesis; coproporphyrinogen-III from 5-aminolevulinate: step 4/4. In terms of biological role, catalyzes the decarboxylation of four acetate groups of uroporphyrinogen-III to yield coproporphyrinogen-III. The sequence is that of Uroporphyrinogen decarboxylase from Halalkalibacterium halodurans (strain ATCC BAA-125 / DSM 18197 / FERM 7344 / JCM 9153 / C-125) (Bacillus halodurans).